The chain runs to 230 residues: Cytidylate kinase (230 aa).

12–20 (GPSGAGKGT) serves as a coordination point for ATP.

Belongs to the cytidylate kinase family. Type 1 subfamily.

It is found in the cytoplasm. The enzyme catalyses CMP + ATP = CDP + ADP. It carries out the reaction dCMP + ATP = dCDP + ADP. This chain is Cytidylate kinase, found in Shewanella sp. (strain W3-18-1).